The primary structure comprises 131 residues: Small ribosomal subunit protein uS9 (131 aa).

The protein belongs to the universal ribosomal protein uS9 family.

In Actinobacillus pleuropneumoniae serotype 7 (strain AP76), this protein is Small ribosomal subunit protein uS9.